A 321-amino-acid chain; its full sequence is tRNA(Ile)-lysidine synthase (321 aa).

20 to 25 (SGGADS) contributes to the ATP binding site.

This sequence belongs to the tRNA(Ile)-lysidine synthase family.

The protein localises to the cytoplasm. The enzyme catalyses cytidine(34) in tRNA(Ile2) + L-lysine + ATP = lysidine(34) in tRNA(Ile2) + AMP + diphosphate + H(+). Functionally, ligates lysine onto the cytidine present at position 34 of the AUA codon-specific tRNA(Ile) that contains the anticodon CAU, in an ATP-dependent manner. Cytidine is converted to lysidine, thus changing the amino acid specificity of the tRNA from methionine to isoleucine. The polypeptide is tRNA(Ile)-lysidine synthase (Bordetella pertussis (strain Tohama I / ATCC BAA-589 / NCTC 13251)).